We begin with the raw amino-acid sequence, 587 residues long: Serine/threonine-protein phosphatase 2A 65 kDa regulatory subunit A gamma isoform (587 aa).

Serine 2 carries the post-translational modification N-acetylserine. HEAT repeat units follow at residues 2-42, 44-80, 81-119, 158-194, 197-235, 236-274, 276-313, 314-352, 353-391, 393-430, 432-469, 470-508, 509-547, and 549-586; these read SMVD…ALGE, RTRKELIPFLSENNDDDDEVLLAMAEELGGFILYVGG, VEYAYVLLPPLETLSTVEETCVREKAVDSLCRIGAQMRE, DVLKTELRSIYGQLCQDDMPMVRRAAATNLGKFAATI, AHLKTDIMSMFEDLTQDDQDSVRLLAVEGCAALGKLLEP, QDCVAHILPVIVNFSQDKSWRVRYMVANQLYELCEAVGP, PTRTDLVPAYARLLCDNEAEVRIAAAGKVTKFCRILNP, ELAIQHILPCVKELSSDSSQHVRSALASVIMGMAPVLGK, DATIEHLLPIFLSLLKDEFPDVRLNIISKLDQVNQVIGI, LLSQSLLPAIVELAEDRHWRVRLAIIEYIPLLASQLGV, FFDEKLGALCMQWLQDKVHSIREAAANNLKRLAEEFGP, EWAMQHIVPQVLEMINNPHYLYRMTILRAVSLLAPVMGS, EITCSKLLPAVITASKDRVPNIKFNVAKMMQSLIPIVDQ, and VVENMIRPCLVELSEDPDVDVRYFANQALQSIDNVMMS.

It belongs to the phosphatase 2A regulatory subunit A family. In terms of assembly, PP2A consists of a common heterodimeric core enzyme, composed of a 36 kDa catalytic subunit (subunit C) and a 65 kDa constant regulatory subunit (subunit A), that associates with a variety of regulatory subunits such as subunits B (the R2/B/PR55/B55, R3/B''/PR72/PR130/PR59 and R5/B'/B56 families). Interacts with CHIP. Interacts with SRK2E/OST1. Post-translationally, ubiquitinated. CHIP-mediated ubiquitination enhances phosphatase activity after an abiotic stress such as low temperature or darkness. In terms of tissue distribution, expressed ubiquitously at stable levels. However, higher protein levels in roots and flowers (at protein level).

It is found in the cytoplasm. It localises to the cytosol. Its subcellular location is the nucleus. The A subunit of protein phosphatase 2A serves as a scaffolding molecule to coordinate the assembly of the catalytic subunit and a variable regulatory B subunit. Involved during developmental process such as seedling and floral developments. Seems to act as a negative regulator of PP2A catalytic activity. The protein is Serine/threonine-protein phosphatase 2A 65 kDa regulatory subunit A gamma isoform (PP2AA3) of Arabidopsis thaliana (Mouse-ear cress).